A 366-amino-acid chain; its full sequence is tRNA/tmRNA (uracil-C(5))-methyltransferase (366 aa).

5 residues coordinate S-adenosyl-L-methionine: Gln-190, Tyr-218, Asn-223, Glu-239, and Asp-299. Cys-324 serves as the catalytic Nucleophile. Catalysis depends on Glu-358, which acts as the Proton acceptor.

The protein belongs to the class I-like SAM-binding methyltransferase superfamily. RNA M5U methyltransferase family. TrmA subfamily.

It carries out the reaction uridine(54) in tRNA + S-adenosyl-L-methionine = 5-methyluridine(54) in tRNA + S-adenosyl-L-homocysteine + H(+). The catalysed reaction is uridine(341) in tmRNA + S-adenosyl-L-methionine = 5-methyluridine(341) in tmRNA + S-adenosyl-L-homocysteine + H(+). Its function is as follows. Dual-specificity methyltransferase that catalyzes the formation of 5-methyluridine at position 54 (m5U54) in all tRNAs, and that of position 341 (m5U341) in tmRNA (transfer-mRNA). The polypeptide is tRNA/tmRNA (uracil-C(5))-methyltransferase (Salmonella paratyphi B (strain ATCC BAA-1250 / SPB7)).